Reading from the N-terminus, the 339-residue chain is Small ribosomal subunit protein mS27 (339 aa).

The transit peptide at 1–37 (MGTITVVINEGPILLIRALHRATTNKKMFRSTVWRRF) directs the protein to the mitochondrion.

Belongs to the mitochondrion-specific ribosomal protein mS27 family. As to quaternary structure, component of the mitochondrial small ribosomal subunit (mt-SSU). Mature yeast 74S mitochondrial ribosomes consist of a small (37S) and a large (54S) subunit. The 37S small subunit contains a 15S ribosomal RNA (15S mt-rRNA) and 34 different proteins. The 54S large subunit contains a 21S rRNA (21S mt-rRNA) and 46 different proteins.

Its subcellular location is the mitochondrion. Its function is as follows. Component of the mitochondrial ribosome (mitoribosome), a dedicated translation machinery responsible for the synthesis of mitochondrial genome-encoded proteins, including at least some of the essential transmembrane subunits of the mitochondrial respiratory chain. The mitoribosomes are attached to the mitochondrial inner membrane and translation products are cotranslationally integrated into the membrane. This Saccharomyces cerevisiae (strain ATCC 204508 / S288c) (Baker's yeast) protein is Small ribosomal subunit protein mS27 (MRP13).